The chain runs to 393 residues: Zinc finger CCCH domain-containing protein 2 (393 aa).

The tract at residues 1-71 is disordered; sequence MDVVCTEHQM…NRENKEYCYD (71 aa). Positions 20 to 37 are enriched in low complexity; that stretch reads RKLLLSSKSFPSDSSSPR. Over residues 60-69 the composition is skewed to basic and acidic residues; that stretch reads DNNRENKEYC. C3H1-type zinc fingers lie at residues 122-150 and 159-181; these read QYSGEVCPEFRRGGDCSRGDDCEFAHGVF and YRTEACKDGKHCKRKVCFFAHSP.

As to quaternary structure, interacts with MARD1/FLZ9 and RD21A. In terms of tissue distribution, specifically expressed in seeds.

The protein localises to the nucleus. Its function is as follows. Probable transcription repressor that functions as a negative regulator of phytochrome-mediated promotion of seed germination. Inhibits seed germination by regulating the expression of gibberellic acid (GA) and abscisic acid (ABA) metabolic genes. Does not regulate the expression of the DELLA genes RGA and RGA1. Activated by PIL5, a phytochrome-interacting basic helix-loop-helix transcription factor. Represses directly JMJ20 and JMJ22 expression in the absence of red light (R) and in far-red (FR) conditions. This chain is Zinc finger CCCH domain-containing protein 2, found in Arabidopsis thaliana (Mouse-ear cress).